The primary structure comprises 430 residues: MLSRLFLRHSNLRFVTLVSSKSNSQIFSSFIRPLSTNSSGGGGNGDGNGRNRNDVPWSFTGVNDDKSGPFSSDDSFGSSGVAGSGLPGGEGKWPEEPKRWNIKEEEEKVVFDTGGEVGQGIETSRERRGNEWEETKRWDMKEGEEKVVFGGGGDEVDGFGIRGEVKSNEWDVSKPWNLKEEEEGVVFDTGGEVPFSFENSLEMAEEERVKKELIEKEEKELLEVIKGPDRAFGDLIAKSGITDEMLDSLIALKDFQGVEGLPPLTEIENLRREKSSKKSSRAEIELQMQEDIAKARVRQVDETGRAYGTGRRKCSIARVWIQPGEGKFQVNEKEFDVYFPMLDHRAALLRPLAETKTLGRWDIKCTVKGGGTTGQVGAIQLGISRALQNWEPDMRTSLRAAGFLTRDSRVVERKKPGKAKARKSFQWVKR.

The transit peptide at 1–34 (MLSRLFLRHSNLRFVTLVSSKSNSQIFSSFIRPL) directs the protein to the mitochondrion. Residues 32–97 (RPLSTNSSGG…GGEGKWPEEP (66 aa)) form a disordered region. Over residues 39 to 48 (SGGGGNGDGN) the composition is skewed to gly residues. Over residues 68–79 (GPFSSDDSFGSS) the composition is skewed to low complexity. The span at 80–91 (GVAGSGLPGGEG) shows a compositional bias: gly residues.

It belongs to the universal ribosomal protein uS9 family. In terms of assembly, interacts (via C terminus) with PIA2. Component of the mitochondrial ribosome small subunit. In terms of tissue distribution, expressed in root tips, young leaves, flowers and siliques.

Its subcellular location is the mitochondrion. Functionally, mitochondrial ribosomal protein required for central cell maturation. May work together with PIA2 in controlling female gametophyte development, possibly by regulating the expression of some mitochondrial proteins. This chain is Small ribosomal subunit protein uS9m, found in Arabidopsis thaliana (Mouse-ear cress).